The following is a 584-amino-acid chain: 4-hydroxybenzoate decarboxylase subunit C (584 aa).

It belongs to the UbiD family. In terms of assembly, component of the decarboxylase complex composed of the subunits B and C (Potential). The subunit D usually found in other organisms seems to be absent.

The catalysed reaction is 4-hydroxybenzoate + H(+) = phenol + CO2. With respect to regulation, the enzyme activity is enhanced by Mg(2+), Fe(2+), Mn(2+) and Ca(2+). No stimulation is observed with Cu(2+) and Zn(2+). Catalyzes the reversible decarboxylation of 4-hydroxybenzoate. This is 4-hydroxybenzoate decarboxylase subunit C from Chlamydia pneumoniae (Chlamydophila pneumoniae).